A 462-amino-acid chain; its full sequence is Chromosomal replication initiator protein DnaA (462 aa).

Positions 1–86 are domain I, interacts with DnaA modulators; the sequence is MSLSLWQQCL…EVGNKPVSQN (86 aa). Residues 86–125 form a domain II region; the sequence is NDSPPQRVVTHTPVAPAPQNTSVRPSWDNTAVQPELSYRS. Residues 126–342 form a domain III, AAA+ region region; it reads NVNPKHTFDN…GALNRVIANA (217 aa). Residues Gly170, Gly172, Lys173, and Thr174 each contribute to the ATP site. The interval 343–462 is domain IV, binds dsDNA; sequence NFTGRAITID…FSNLIRTLSS (120 aa).

The protein belongs to the DnaA family. As to quaternary structure, oligomerizes as a right-handed, spiral filament on DNA at oriC.

It localises to the cytoplasm. Its function is as follows. Plays an essential role in the initiation and regulation of chromosomal replication. ATP-DnaA binds to the origin of replication (oriC) to initiate formation of the DNA replication initiation complex once per cell cycle. Binds the DnaA box (a 9 base pair repeat at the origin) and separates the double-stranded (ds)DNA. Forms a right-handed helical filament on oriC DNA; dsDNA binds to the exterior of the filament while single-stranded (ss)DNA is stabiized in the filament's interior. The ATP-DnaA-oriC complex binds and stabilizes one strand of the AT-rich DNA unwinding element (DUE), permitting loading of DNA polymerase. After initiation quickly degrades to an ADP-DnaA complex that is not apt for DNA replication. Binds acidic phospholipids. This chain is Chromosomal replication initiator protein DnaA, found in Photorhabdus laumondii subsp. laumondii (strain DSM 15139 / CIP 105565 / TT01) (Photorhabdus luminescens subsp. laumondii).